The following is a 146-amino-acid chain: Urease accessory protein UreE 1 (146 aa).

The protein belongs to the UreE family.

The protein resides in the cytoplasm. Its function is as follows. Involved in urease metallocenter assembly. Binds nickel. Probably functions as a nickel donor during metallocenter assembly. This is Urease accessory protein UreE 1 from Pseudomonas syringae pv. syringae (strain B728a).